Consider the following 261-residue polypeptide: Cytochrome c oxidase subunit 3 (261 aa).

At 1–15 the chain is on the mitochondrial matrix side; it reads MAHQAHAYHMVDPSP. A helical membrane pass occupies residues 16–34; sequence WPLTGAVAALLMTSGLAVW. Over 35–40 the chain is Mitochondrial intermembrane; the sequence is FHFHSM. Residues 41-66 traverse the membrane as a helical segment; sequence YLLYLGLTLLLLTMVQWWRDIIREGT. The Mitochondrial matrix segment spans residues 67–72; it reads FQGHHT. Residues 73 to 105 form a helical membrane-spanning segment; sequence PPVQKGLRYGMILFITSEVFFFLGFFWAFYHSS. Residues 106–128 are Mitochondrial intermembrane-facing; the sequence is LAPTPELGGCWPPTGIYPLDPFE. The chain crosses the membrane as a helical span at residues 129–152; the sequence is VPLLNTAVLLASGVTVTWAHHSLM. Topologically, residues 153 to 155 are mitochondrial matrix; sequence EGN. A helical membrane pass occupies residues 156–183; it reads RKEAIQALTLTVLLGFYFTALQAMEYYE. Residues 184–190 are Mitochondrial intermembrane-facing; the sequence is APFTIAD. The chain crosses the membrane as a helical span at residues 191–223; sequence GVYGSTFFVATGFHGLHVIIGSTFLMVCLLRQI. The Mitochondrial matrix segment spans residues 224 to 232; that stretch reads QYHFTSEHH. Residues 233–256 traverse the membrane as a helical segment; sequence FGFERAAWYWHFVDVVWLFLYVSI. Topologically, residues 257–261 are mitochondrial intermembrane; sequence YWWGS.

It belongs to the cytochrome c oxidase subunit 3 family. In terms of assembly, component of the cytochrome c oxidase (complex IV, CIV), a multisubunit enzyme composed of 14 subunits. The complex is composed of a catalytic core of 3 subunits MT-CO1, MT-CO2 and MT-CO3, encoded in the mitochondrial DNA, and 11 supernumerary subunits COX4I, COX5A, COX5B, COX6A, COX6B, COX6C, COX7A, COX7B, COX7C, COX8 and NDUFA4, which are encoded in the nuclear genome. The complex exists as a monomer or a dimer and forms supercomplexes (SCs) in the inner mitochondrial membrane with NADH-ubiquinone oxidoreductase (complex I, CI) and ubiquinol-cytochrome c oxidoreductase (cytochrome b-c1 complex, complex III, CIII), resulting in different assemblies (supercomplex SCI(1)III(2)IV(1) and megacomplex MCI(2)III(2)IV(2)).

It localises to the mitochondrion inner membrane. It carries out the reaction 4 Fe(II)-[cytochrome c] + O2 + 8 H(+)(in) = 4 Fe(III)-[cytochrome c] + 2 H2O + 4 H(+)(out). Functionally, component of the cytochrome c oxidase, the last enzyme in the mitochondrial electron transport chain which drives oxidative phosphorylation. The respiratory chain contains 3 multisubunit complexes succinate dehydrogenase (complex II, CII), ubiquinol-cytochrome c oxidoreductase (cytochrome b-c1 complex, complex III, CIII) and cytochrome c oxidase (complex IV, CIV), that cooperate to transfer electrons derived from NADH and succinate to molecular oxygen, creating an electrochemical gradient over the inner membrane that drives transmembrane transport and the ATP synthase. Cytochrome c oxidase is the component of the respiratory chain that catalyzes the reduction of oxygen to water. Electrons originating from reduced cytochrome c in the intermembrane space (IMS) are transferred via the dinuclear copper A center (CU(A)) of subunit 2 and heme A of subunit 1 to the active site in subunit 1, a binuclear center (BNC) formed by heme A3 and copper B (CU(B)). The BNC reduces molecular oxygen to 2 water molecules using 4 electrons from cytochrome c in the IMS and 4 protons from the mitochondrial matrix. The sequence is that of Cytochrome c oxidase subunit 3 (MT-CO3) from Squalus acanthias (Spiny dogfish).